The primary structure comprises 48 residues: ATP synthase protein 8 (48 aa).

Residues 13–32 (LTYGFLLMITLLILFSQFFL) traverse the membrane as a helical segment.

The protein belongs to the ATPase protein 8 family. In terms of assembly, F-type ATPases have 2 components, CF(1) - the catalytic core - and CF(0) - the membrane proton channel. In yeast, the dimeric form of ATP synthase consists of 17 polypeptides: alpha, beta, gamma, delta, epsilon, 4 (B), 5 (OSCP), 6 (A), 8, 9 (C), d, E (Tim11), f, g, h, i/j and k.

The protein localises to the mitochondrion membrane. Its function is as follows. Mitochondrial membrane ATP synthase (F(1)F(0) ATP synthase or Complex V) produces ATP from ADP in the presence of a proton gradient across the membrane which is generated by electron transport complexes of the respiratory chain. F-type ATPases consist of two structural domains, F(1) - containing the extramembraneous catalytic core and F(0) - containing the membrane proton channel, linked together by a central stalk and a peripheral stalk. During catalysis, ATP synthesis in the catalytic domain of F(1) is coupled via a rotary mechanism of the central stalk subunits to proton translocation. Part of the complex F(0) domain. Minor subunit located with subunit a in the membrane. This Saccharomyces cerevisiae (strain ATCC 204508 / S288c) (Baker's yeast) protein is ATP synthase protein 8 (ATP8).